The primary structure comprises 111 residues: Ribonuclease P protein component (111 aa).

It belongs to the RnpA family. Consists of a catalytic RNA component (M1 or rnpB) and a protein subunit.

It carries out the reaction Endonucleolytic cleavage of RNA, removing 5'-extranucleotides from tRNA precursor.. Its function is as follows. RNaseP catalyzes the removal of the 5'-leader sequence from pre-tRNA to produce the mature 5'-terminus. It can also cleave other RNA substrates such as 4.5S RNA. The protein component plays an auxiliary but essential role in vivo by binding to the 5'-leader sequence and broadening the substrate specificity of the ribozyme. The chain is Ribonuclease P protein component from Borreliella afzelii (strain PKo) (Borrelia afzelii).